The sequence spans 1284 residues: Integrator complex subunit 6 (1284 aa).

The region spanning 3-134 (IILFLVDTSS…PSVIIVITDG (132 aa)) is the VWFA domain. 4 disordered regions span residues 653–824 (DVAP…GMSN), 864–895 (ETGE…SPAV), 1053–1086 (TSSG…DDHA), and 1125–1180 (NNSS…PGQS). Residues 690–721 (SPGGGSGPGMPGMPGMGGGMSGLMLGAGGSGG) are compositionally biased toward gly residues. Low complexity-rich tracts occupy residues 752-781 (DSRS…SSIS) and 803-824 (NSNS…GMSN). Residues 879–890 (GASSANEPSSIG) are compositionally biased toward polar residues. Composition is skewed to low complexity over residues 1053–1074 (TSSG…NGST) and 1125–1141 (NNSS…LSNN). Polar residues predominate over residues 1159–1171 (INSSCGSSPTHNN).

The protein belongs to the Integrator subunit 6 family. As to quaternary structure, belongs to the multiprotein complex Integrator, at least composed of IntS1, IntS2, IntS3, IntS4, omd/IntS5, IntS6, defl/IntS7, IntS8, IntS9, IntS10, IntS11, IntS12, asun/IntS13, IntS14 and IntS15. The core complex associates with protein phosphatase 2A subunits mts/PP2A and Pp2A-29B, to form the Integrator-PP2A (INTAC) complex.

It is found in the nucleus. Its function is as follows. Component of the integrator complex, a multiprotein complex that terminates RNA polymerase II (Pol II) transcription in the promoter-proximal region of genes. The integrator complex provides a quality checkpoint during transcription elongation by driving premature transcription termination of transcripts that are unfavorably configured for transcriptional elongation: the complex terminates transcription by (1) catalyzing dephosphorylation of the C-terminal domain (CTD) of Pol II subunit Polr2A/Rbp1 and Spt5, and (2) degrading the exiting nascent RNA transcript via endonuclease activity. The integrator complex is also involved in the 3'-end processing of the U7 snRNA, and also the spliceosomal snRNAs U1, U2, U4 and U5. Within the integrator complex, IntS6 acts as a substrate adapter for protein phosphatase 2A (PP2A). The protein is Integrator complex subunit 6 of Drosophila melanogaster (Fruit fly).